Here is a 233-residue protein sequence, read N- to C-terminus: Enolase-phosphatase E1 (233 aa).

Mg(2+) contacts are provided by aspartate 16 and glutamate 18. Substrate contacts are provided by residues 131-132 (SS) and lysine 167. Aspartate 193 contributes to the Mg(2+) binding site.

Belongs to the HAD-like hydrolase superfamily. MasA/MtnC family. In terms of assembly, monomer. Requires Mg(2+) as cofactor.

It is found in the cytoplasm. The protein resides in the nucleus. The catalysed reaction is 5-methylsulfanyl-2,3-dioxopentyl phosphate + H2O = 1,2-dihydroxy-5-(methylsulfanyl)pent-1-en-3-one + phosphate. Its pathway is amino-acid biosynthesis; L-methionine biosynthesis via salvage pathway; L-methionine from S-methyl-5-thio-alpha-D-ribose 1-phosphate: step 3/6. It participates in amino-acid biosynthesis; L-methionine biosynthesis via salvage pathway; L-methionine from S-methyl-5-thio-alpha-D-ribose 1-phosphate: step 4/6. Functionally, bifunctional enzyme that catalyzes the enolization of 2,3-diketo-5-methylthiopentyl-1-phosphate (DK-MTP-1-P) into the intermediate 2-hydroxy-3-keto-5-methylthiopentenyl-1-phosphate (HK-MTPenyl-1-P), which is then dephosphorylated to form the acireductone 1,2-dihydroxy-3-keto-5-methylthiopentene (DHK-MTPene). In Meyerozyma guilliermondii (strain ATCC 6260 / CBS 566 / DSM 6381 / JCM 1539 / NBRC 10279 / NRRL Y-324) (Yeast), this protein is Enolase-phosphatase E1.